A 347-amino-acid polypeptide reads, in one-letter code: Heme A synthase (347 aa).

Transmembrane regions (helical) follow at residues 17 to 37 (LANW…VGGI), 106 to 126 (GIGA…AIPA), 132 to 152 (MIGI…MVYS), 165 to 185 (LATH…TVLD), 202 to 222 (ALAI…AFVA), 260 to 280 (IVVQ…ALAV), 295 to 315 (AVAT…LTGV), and 317 to 337 (IAVA…LLWA). A heme-binding site is contributed by H266. Heme is bound at residue H323.

The protein belongs to the COX15/CtaA family. Type 2 subfamily. As to quaternary structure, interacts with CtaB. It depends on heme b as a cofactor.

Its subcellular location is the cell membrane. The enzyme catalyses Fe(II)-heme o + 2 A + H2O = Fe(II)-heme a + 2 AH2. It participates in porphyrin-containing compound metabolism; heme A biosynthesis; heme A from heme O: step 1/1. Catalyzes the conversion of heme O to heme A by two successive hydroxylations of the methyl group at C8. The first hydroxylation forms heme I, the second hydroxylation results in an unstable dihydroxymethyl group, which spontaneously dehydrates, resulting in the formyl group of heme A. The chain is Heme A synthase from Rhizorhabdus wittichii (strain DSM 6014 / CCUG 31198 / JCM 15750 / NBRC 105917 / EY 4224 / RW1) (Sphingomonas wittichii).